We begin with the raw amino-acid sequence, 384 residues long: Inactive lipoate--protein ligase 2 (384 aa).

In terms of domain architecture, BPL/LPL catalytic spans 79 to 303; the sequence is NESKGNECIF…HIKHIINYKN (225 aa).

Its subcellular location is the mitochondrion. It localises to the plastid. It is found in the apicoplast. Its function is as follows. In the mitochondrion and together with LipL1, involved in the lipoylation of the E2 component of the branched chain alpha-ketoacid dehydrogenase complex BCKDH-E2/BCDH and the E2 component of the alpha -ketoglutarate dehydrogenase complex KDH. LipL1 is responsible for catalysing the activation of lipoate, forming lipoyl-AMP while LipL2 is required but is not capable of catalyzing this reaction. Although its role is unclear, it may catalyze the transfer of lipoyl groups from lipoyl-AMP to BCDH and KDH or act as an effector protein. This chain is Inactive lipoate--protein ligase 2, found in Plasmodium falciparum (isolate 3D7).